We begin with the raw amino-acid sequence, 342 residues long: L-threonine 3-dehydrogenase (342 aa).

Cys38 contacts Zn(2+). Active-site charge relay system residues include Thr40 and His43. Zn(2+)-binding residues include His63, Glu64, Cys93, Cys96, Cys99, and Cys107. NAD(+) contacts are provided by residues Ile175, Asp195, Arg200, 262–264, and 286–287; these read LGI and IY.

It belongs to the zinc-containing alcohol dehydrogenase family. Homotetramer. Zn(2+) serves as cofactor.

The protein localises to the cytoplasm. It carries out the reaction L-threonine + NAD(+) = (2S)-2-amino-3-oxobutanoate + NADH + H(+). It functions in the pathway amino-acid degradation; L-threonine degradation via oxydo-reductase pathway; glycine from L-threonine: step 1/2. Functionally, catalyzes the NAD(+)-dependent oxidation of L-threonine to 2-amino-3-ketobutyrate. The protein is L-threonine 3-dehydrogenase of Burkholderia cenocepacia (strain ATCC BAA-245 / DSM 16553 / LMG 16656 / NCTC 13227 / J2315 / CF5610) (Burkholderia cepacia (strain J2315)).